Reading from the N-terminus, the 1368-residue chain is DNA-directed RNA polymerase subunit beta (1368 aa).

The protein belongs to the RNA polymerase beta chain family. In terms of assembly, the RNAP catalytic core consists of 2 alpha, 1 beta, 1 beta' and 1 omega subunit. When a sigma factor is associated with the core the holoenzyme is formed, which can initiate transcription.

The enzyme catalyses RNA(n) + a ribonucleoside 5'-triphosphate = RNA(n+1) + diphosphate. In terms of biological role, DNA-dependent RNA polymerase catalyzes the transcription of DNA into RNA using the four ribonucleoside triphosphates as substrates. The sequence is that of DNA-directed RNA polymerase subunit beta from Cupriavidus taiwanensis (strain DSM 17343 / BCRC 17206 / CCUG 44338 / CIP 107171 / LMG 19424 / R1) (Ralstonia taiwanensis (strain LMG 19424)).